We begin with the raw amino-acid sequence, 380 residues long: Cytochrome b (380 aa).

4 helical membrane passes run 34 to 54 (FGSL…LLAM), 78 to 99 (WLIR…YLHI), 114 to 134 (WNTG…GYVL), and 179 to 199 (FFAL…IHLT). The heme b site is built by His84 and His98. Positions 183 and 197 each coordinate heme b. His202 lines the a ubiquinone pocket. The next 4 helical transmembrane spans lie at 227-247 (LKDF…ALFS), 289-309 (LGGV…PFLH), 321-341 (ISQL…WVGS), and 348-368 (FIII…ILFP).

The protein belongs to the cytochrome b family. The cytochrome bc1 complex contains 11 subunits: 3 respiratory subunits (MT-CYB, CYC1 and UQCRFS1), 2 core proteins (UQCRC1 and UQCRC2) and 6 low-molecular weight proteins (UQCRH/QCR6, UQCRB/QCR7, UQCRQ/QCR8, UQCR10/QCR9, UQCR11/QCR10 and a cleavage product of UQCRFS1). This cytochrome bc1 complex then forms a dimer. The cofactor is heme b.

The protein localises to the mitochondrion inner membrane. Its function is as follows. Component of the ubiquinol-cytochrome c reductase complex (complex III or cytochrome b-c1 complex) that is part of the mitochondrial respiratory chain. The b-c1 complex mediates electron transfer from ubiquinol to cytochrome c. Contributes to the generation of a proton gradient across the mitochondrial membrane that is then used for ATP synthesis. This chain is Cytochrome b (MT-CYB), found in Pelecanoides urinatrix (Common diving petrel).